The following is a 507-amino-acid chain: Extracellular elastase (507 aa).

A signal peptide spans 1 to 28 (MKNFSKFALTSIAALTVASPLVNTEVDA). A propeptide spanning residues 29-207 (KDKVSATQNI…VVDKLNMIKE (179 aa)) is cleaved from the precursor. Asp347 is a Ca(2+) binding site. His351 provides a ligand contact to Zn(2+). Glu352 is a catalytic residue. Residues His355 and Glu375 each coordinate Zn(2+). Ca(2+) is bound by residues Asp386, Glu388, Asp389, Leu391, Glu394, Tyr397, Thr398, Val401, and Asp404. The active-site Proton donor is His435.

This sequence belongs to the peptidase M4 family. Ca(2+) serves as cofactor. The cofactor is Zn(2+).

The protein localises to the secreted. In terms of biological role, protease that has a low substrate specificity. Glucagon is preferentially cleaved between aromatic (Phe) and hydrophobic (Val) amino acids. Hydrolyzes casein and elastin. In Staphylococcus epidermidis (strain ATCC 12228 / FDA PCI 1200), this protein is Extracellular elastase (sepA).